Here is a 790-residue protein sequence, read N- to C-terminus: Nuclear cap-binding protein subunit 1 (790 aa).

The interval 1-26 (MSRRRHSDENDGGQPHKRRKTSDANE) is disordered. Residues 3-20 (RRRHSDENDGGQPHKRRK) carry the Nuclear localization signal motif. Position 7 is a phosphoserine; by RPS6KB1 (Ser7). The residue at position 21 (Thr21) is a Phosphothreonine; by RPS6KB1. Phosphoserine; by RPS6KB1 is present on Ser22. The MIF4G domain maps to 28-240 (EDHLESLICK…CLWAQIQKLK (213 aa)). Position 201 is a phosphoserine (Ser201). Lys204 bears the N6-acetyllysine mark. Positions 643 to 713 (STIRKMNKHV…SEQKNLFLVI (71 aa)) form a coiled coil. Lys684 participates in a covalent cross-link: Glycyl lysine isopeptide (Lys-Gly) (interchain with G-Cter in SUMO2). Position 698 is an N6-acetyllysine (Lys698).

It belongs to the NCBP1 family. As to quaternary structure, component of the nuclear cap-binding complex (CBC), a heterodimer composed of NCBP1/CBP80 and NCBP2/CBP20 that interacts with m7GpppG-capped RNA. Found in a U snRNA export complex containing PHAX/RNUXA, NCBP1/CBP80, NCBP2/CBP20, RAN, XPO1 and m7G-capped RNA. Identified in a IGF2BP1-dependent mRNP granule complex containing untranslated mRNAs. Interacts with PHAX/RNUXA, SRRT/ARS2, EIF4G2, IGF2BP1, HNRNPF, HNRNPH1, KIAA0427/CTIF, PARN, DROSHA, UPF1 and ALYREF/THOC4. May interact with EIF4G1; the interaction is however controversial since it is reported by PubMed:11340157, PubMed:15059963 and PubMed:15361857, but is not observed by PubMed:19648179. The large PER complex involved in the repression of transcriptional termination is composed of at least PER2, CDK9, DDX5, DHX9, NCBP1/CBP80 and POLR2A. Component of an alternative nuclear cap-binding complex (CBC) composed of NCBP1/CBP80 and NCBP3. Interacts with METTL3. Interacts with ZFC3H1 in a RNase-insensitive manner. Interacts with MTREX. Interacts with TASOR. Interacts with DHX34; the interaction is RNA-dependent. Interacts with KPNA3. In terms of processing, dephosphorylated at Thr-21 by the PNUTS-PP1 complex during RNA polymerase II transcription pause-release.

It localises to the nucleus. The protein localises to the cytoplasm. Its function is as follows. Component of the cap-binding complex (CBC), which binds cotranscriptionally to the 5'-cap of pre-mRNAs and is involved in various processes such as pre-mRNA splicing, translation regulation, nonsense-mediated mRNA decay, RNA-mediated gene silencing (RNAi) by microRNAs (miRNAs) and mRNA export. The CBC complex is involved in mRNA export from the nucleus via its interaction with ALYREF/THOC4/ALY, leading to the recruitment of the mRNA export machinery to the 5'-end of mRNA and to mRNA export in a 5' to 3' direction through the nuclear pore. The CBC complex is also involved in mediating U snRNA and intronless mRNAs export from the nucleus. The CBC complex is essential for a pioneer round of mRNA translation, before steady state translation when the CBC complex is replaced by cytoplasmic cap-binding protein eIF4E. The pioneer round of mRNA translation mediated by the CBC complex plays a central role in nonsense-mediated mRNA decay (NMD), NMD only taking place in mRNAs bound to the CBC complex, but not on eIF4E-bound mRNAs. The CBC complex enhances NMD in mRNAs containing at least one exon-junction complex (EJC) via its interaction with UPF1, promoting the interaction between UPF1 and UPF2. The CBC complex is also involved in 'failsafe' NMD, which is independent of the EJC complex, while it does not participate in Staufen-mediated mRNA decay (SMD). During cell proliferation, the CBC complex is also involved in microRNAs (miRNAs) biogenesis via its interaction with SRRT/ARS2 and is required for miRNA-mediated RNA interference. The CBC complex also acts as a negative regulator of PARN, thereby acting as an inhibitor of mRNA deadenylation. In the CBC complex, NCBP1/CBP80 does not bind directly capped RNAs (m7GpppG-capped RNA) but is required to stabilize the movement of the N-terminal loop of NCBP2/CBP20 and lock the CBC into a high affinity cap-binding state with the cap structure. Associates with NCBP3 to form an alternative cap-binding complex (CBC) which plays a key role in mRNA export and is particularly important in cellular stress situations such as virus infections. The conventional CBC with NCBP2 binds both small nuclear RNA (snRNA) and messenger (mRNA) and is involved in their export from the nucleus whereas the alternative CBC with NCBP3 does not bind snRNA and associates only with mRNA thereby playing a role only in mRNA export. NCBP1/CBP80 is required for cell growth and viability. The sequence is that of Nuclear cap-binding protein subunit 1 (NCBP1) from Homo sapiens (Human).